The sequence spans 414 residues: Nuclear localization sequence-binding protein (414 aa).

Disordered regions lie at residues 1–172, 244–264, and 336–414; these read MAKT…TIFV, STSKPAGNNDRAKKFGDTPSE, and RPVR…KTFD. The segment covering 10-26 has biased composition (basic and acidic residues); it reads NKKEVKASKQAKEEKAK. Low complexity-rich tracts occupy residues 27–44 and 54–73; these read AVSSSSSESSSSSSSSSE and ESSSSSSSSDSESSSSSSSD. Over residues 78–87 the composition is skewed to basic and acidic residues; sequence AETKKEESKD. Residues S93, S95, S96, S97, S116, S127, S129, S131, and S143 each carry the phosphoserine modification. Residues 96–105 are compositionally biased toward acidic residues; sequence SSDEEEEEEK. Residues 106-117 show a composition bias toward basic and acidic residues; sequence EETKKEESKESS. Residues 118–128 show a composition bias toward low complexity; that stretch reads SSDSSSSSSSD. Positions 134 to 144 are enriched in basic and acidic residues; sequence EESNDKKRKSE. RRM domains lie at 168–246 and 267–345; these read ATIF…MSTS and DTLF…FSSP. The span at 351 to 386 shows a compositional bias: gly residues; that stretch reads GGRGGSRGFGGRGGGRGGNRGFGGRGGARGGRGGFR. Position 353 is an omega-N-methylarginine (R353). The segment at 353–384 is RGG-box; it reads RGGSRGFGGRGGGRGGNRGFGGRGGARGGRGG. Asymmetric dimethylarginine; by HMT1; alternate occurs at positions 357, 362, and 366. Residues R357, R362, and R366 each carry the omega-N-methylarginine; by HMT1; alternate modification. The tract at residues 366 to 384 is RNA-binding RGG-box; that stretch reads RGGNRGFGGRGGARGGRGG. Position 370 is an omega-N-methylarginine (R370). Asymmetric dimethylarginine; by HMT1; alternate is present on residues R375, R379, and R382. Omega-N-methylarginine; by HMT1; alternate is present on residues R375, R379, and R382. R386 carries the omega-N-methylarginine modification.

This sequence belongs to the RRM GAR family. In terms of processing, methylated by HMT1, forming asymmetric dimethylarginines (DMA) within a domain referred to as an RGG box, made up of repeated Gly-Gly dipeptides interspersed with Arg and aromatic residues. Pyrophosphorylated by 5-diphosphoinositol pentakisphosphate (5-IP7). Serine pyrophosphorylation is achieved by Mg(2+)-dependent, but enzyme independent transfer of a beta-phosphate from a inositol pyrophosphate to a pre-phosphorylated serine residue.

The protein resides in the nucleus. It is found in the nucleolus. Functionally, involved in pre-rRNA processing. Specifically binds nuclear localization sequences. Candidate for a receptor at the nucleus that may be involved in both RNA and protein transport. Binds telomeric sequences of the type (TG[1-3])n in vitro. This chain is Nuclear localization sequence-binding protein, found in Saccharomyces cerevisiae (strain ATCC 204508 / S288c) (Baker's yeast).